A 531-amino-acid polypeptide reads, in one-letter code: Pyruvate kinase (531 aa).

Arg-86 is a binding site for substrate. K(+) contacts are provided by Asn-88, Ser-90, Asp-121, and Thr-122. An ATP-binding site is contributed by 88–91 (NFSH). Residues Arg-128 and Lys-211 each coordinate ATP. Residue Glu-277 participates in Mg(2+) binding. 3 residues coordinate substrate: Gly-300, Asp-301, and Thr-333. Residue Asp-301 coordinates Mg(2+).

The protein belongs to the pyruvate kinase family. Homotetramer. Mg(2+) is required as a cofactor. The cofactor is K(+).

The enzyme catalyses pyruvate + ATP = phosphoenolpyruvate + ADP + H(+). The protein operates within carbohydrate degradation; glycolysis; pyruvate from D-glyceraldehyde 3-phosphate: step 5/5. This chain is Pyruvate kinase (PYK), found in Eimeria tenella (Coccidian parasite).